The chain runs to 35 residues: Putative gene 58 protein (35 aa).

The protein is Putative gene 58 protein (58) of Bacillus phage SP01 (Bacteriophage SP01).